Reading from the N-terminus, the 219-residue chain is Thiamine-phosphate synthase (219 aa).

4-amino-2-methyl-5-(diphosphooxymethyl)pyrimidine is bound by residues 44–48 (QFREK) and asparagine 79. Residues aspartate 80 and aspartate 99 each contribute to the Mg(2+) site. Serine 117 contributes to the 4-amino-2-methyl-5-(diphosphooxymethyl)pyrimidine binding site. Position 143–145 (143–145 (TST)) interacts with 2-[(2R,5Z)-2-carboxy-4-methylthiazol-5(2H)-ylidene]ethyl phosphate. Position 146 (lysine 146) interacts with 4-amino-2-methyl-5-(diphosphooxymethyl)pyrimidine. Residues glycine 175 and 195-196 (IS) each bind 2-[(2R,5Z)-2-carboxy-4-methylthiazol-5(2H)-ylidene]ethyl phosphate.

The protein belongs to the thiamine-phosphate synthase family. Requires Mg(2+) as cofactor.

It carries out the reaction 2-[(2R,5Z)-2-carboxy-4-methylthiazol-5(2H)-ylidene]ethyl phosphate + 4-amino-2-methyl-5-(diphosphooxymethyl)pyrimidine + 2 H(+) = thiamine phosphate + CO2 + diphosphate. The enzyme catalyses 2-(2-carboxy-4-methylthiazol-5-yl)ethyl phosphate + 4-amino-2-methyl-5-(diphosphooxymethyl)pyrimidine + 2 H(+) = thiamine phosphate + CO2 + diphosphate. The catalysed reaction is 4-methyl-5-(2-phosphooxyethyl)-thiazole + 4-amino-2-methyl-5-(diphosphooxymethyl)pyrimidine + H(+) = thiamine phosphate + diphosphate. It participates in cofactor biosynthesis; thiamine diphosphate biosynthesis; thiamine phosphate from 4-amino-2-methyl-5-diphosphomethylpyrimidine and 4-methyl-5-(2-phosphoethyl)-thiazole: step 1/1. Functionally, condenses 4-methyl-5-(beta-hydroxyethyl)thiazole monophosphate (THZ-P) and 2-methyl-4-amino-5-hydroxymethyl pyrimidine pyrophosphate (HMP-PP) to form thiamine monophosphate (TMP). The protein is Thiamine-phosphate synthase of Bacillus cereus (strain 03BB102).